The following is a 461-amino-acid chain: MSFVNVAPQLVSTAAADAARIGSAINTANTAAAATTQVLAAAQDEVSTAIAALFGSHGQHYQAISAQVAAYQQRFVLALSQAGSTYAVAEAASATPLQNVLDAINAPVQSLTGRPLIGDGANGIDGTGQAGGNGGWLWGNGGNGGSGAPGQAGGAGGAAGLIGNGGAGGAGGQGLPFEAGANGGAGGAGGWLFGNGGAGGNGGIGGAGTNLAIGGHGGNGGNAGLIGAGGTGGAGGTGGGEPSAGASGGNGGNGGNGGLLIGNSGDGGAAGNGAGISQNGPASGFGGNGGHAGTTGLIGNGGNGGAGGAGGDVSADFGGVGFGGQGGNGGAGGLLYGNGGAGGNGGAAGSPGSVTAFGGNGGSGGSGGNGGNALIGNAGAGGSAGAGGNGASAGTAGGSGGDGGKGGNGGSVGLIGNGGNGGNGGAGSLFNGAPGFGGPGGSGGASLLGPPGLAGTNGADG.

Residues Val4–Ala92 enclose the PE domain. 2 disordered regions span residues Gly232–Gly251 and Ala426–Gly461. A compositionally biased stretch (gly residues) spans Pro434–Ser446.

The protein belongs to the mycobacterial PE family. PGRS subfamily. As to quaternary structure, interacts with human TIMM23, which is part of a complex that mediates the translocation of transit peptide-containing proteins across the mitochondrial inner membrane.

Its subcellular location is the cell membrane. It is found in the secreted. It localises to the cell wall. The protein resides in the host mitochondrion. It carries out the reaction hexadecanal + NADP(+) + CoA = hexadecanoyl-CoA + NADPH + H(+). With respect to regulation, oxidoreductase activity is inhibited by the first line anti-tubercular drug isoniazid (INH). May be an effector protein that contributes to pathogenesis by targeting host mitochondria, where it modulates host cellular processes. In THP1 macrophages, increases the ADP-to-ATP ratio and increases the cellular ROS levels. Also induces mitochondrial perturbations through membrane depolarization, release of mitochondrial superoxide, up-regulation of expression of host proapoptotic proteins (BAX and BIM) and release of cytochrome C into the cytosol. May bind calcium to increase intracellular calcium influx, which may further lead to mitochondrial perturbations. Mitochondrial perturbations and alteration of Ca(2+) influx are independent but simultaneous events. In terms of biological role, in vitro, shows NADPH-dependent fatty acyl coenzyme A oxidoreductase activity. Can oxidize palmitoyl-CoA, but not glutathione and thiourea. This Mycobacterium tuberculosis (strain ATCC 25618 / H37Rv) protein is PE-PGRS family protein PE_PGRS45.